Consider the following 466-residue polypeptide: 3-isopropylmalate dehydratase large subunit (466 aa).

3 residues coordinate [4Fe-4S] cluster: C347, C407, and C410.

The protein belongs to the aconitase/IPM isomerase family. LeuC type 1 subfamily. In terms of assembly, heterodimer of LeuC and LeuD. It depends on [4Fe-4S] cluster as a cofactor.

It catalyses the reaction (2R,3S)-3-isopropylmalate = (2S)-2-isopropylmalate. It participates in amino-acid biosynthesis; L-leucine biosynthesis; L-leucine from 3-methyl-2-oxobutanoate: step 2/4. In terms of biological role, catalyzes the isomerization between 2-isopropylmalate and 3-isopropylmalate, via the formation of 2-isopropylmaleate. The polypeptide is 3-isopropylmalate dehydratase large subunit (Shewanella piezotolerans (strain WP3 / JCM 13877)).